We begin with the raw amino-acid sequence, 882 residues long: Molybdenum cofactor sulfurase (882 aa).

N6-(pyridoxal phosphate)lysine is present on K265. C425 is an active-site residue. Residues 496–546 form a disordered region; the sequence is GQPLPLATPGEAGAPPEDSEAQNAVPAARARGSSSPQEDTSPHSGVWNNSP. The segment covering 527–546 has biased composition (polar residues); it reads GSSSPQEDTSPHSGVWNNSP. Phosphoserine is present on residues S528 and S530. The MOSC domain occupies 707-868; the sequence is KQSSDFQRNA…LSVGSQVLPL (162 aa).

The protein belongs to the class-V pyridoxal-phosphate-dependent aminotransferase family. MOCOS subfamily. It depends on pyridoxal 5'-phosphate as a cofactor. Ubiquitously expressed.

The catalysed reaction is Mo-molybdopterin + L-cysteine + AH2 = thio-Mo-molybdopterin + L-alanine + A + H2O. Its pathway is cofactor biosynthesis; molybdopterin biosynthesis. In terms of biological role, sulfurates the molybdenum cofactor. Sulfation of molybdenum is essential for xanthine dehydrogenase (XDH) and aldehyde oxidase (ADO) enzymes in which molybdenum cofactor is liganded by 1 oxygen and 1 sulfur atom in active form. The sequence is that of Molybdenum cofactor sulfurase from Bos taurus (Bovine).